Consider the following 482-residue polypeptide: tRNA sulfurtransferase (482 aa).

In terms of domain architecture, THUMP spans 61 to 165; the sequence is VQICDALTRI…QDVLILVKAR (105 aa). Residues 183 to 184, Lys-265, Gly-287, and Gln-296 each bind ATP; that span reads LI. Cysteines 344 and 456 form a disulfide. The 79-residue stretch at 404–482 folds into the Rhodanese domain; that stretch reads FAPTDVLLDI…GFDNVKVYRP (79 aa). Cys-456 acts as the Cysteine persulfide intermediate in catalysis.

Belongs to the ThiI family.

It localises to the cytoplasm. It catalyses the reaction [ThiI sulfur-carrier protein]-S-sulfanyl-L-cysteine + a uridine in tRNA + 2 reduced [2Fe-2S]-[ferredoxin] + ATP + H(+) = [ThiI sulfur-carrier protein]-L-cysteine + a 4-thiouridine in tRNA + 2 oxidized [2Fe-2S]-[ferredoxin] + AMP + diphosphate. The catalysed reaction is [ThiS sulfur-carrier protein]-C-terminal Gly-Gly-AMP + S-sulfanyl-L-cysteinyl-[cysteine desulfurase] + AH2 = [ThiS sulfur-carrier protein]-C-terminal-Gly-aminoethanethioate + L-cysteinyl-[cysteine desulfurase] + A + AMP + 2 H(+). It functions in the pathway cofactor biosynthesis; thiamine diphosphate biosynthesis. Catalyzes the ATP-dependent transfer of a sulfur to tRNA to produce 4-thiouridine in position 8 of tRNAs, which functions as a near-UV photosensor. Also catalyzes the transfer of sulfur to the sulfur carrier protein ThiS, forming ThiS-thiocarboxylate. This is a step in the synthesis of thiazole, in the thiamine biosynthesis pathway. The sulfur is donated as persulfide by IscS. The protein is tRNA sulfurtransferase of Photorhabdus laumondii subsp. laumondii (strain DSM 15139 / CIP 105565 / TT01) (Photorhabdus luminescens subsp. laumondii).